An 88-amino-acid polypeptide reads, in one-letter code: MAKSLAVALRATGGARVMRRAGREREGCSDTRCRCQRWRRRLQGFGLAAAGGNRYRNKHHYRPAGGDPWDPCYRPMIISTSCAGATRS.

This Hordeum vulgare (Barley) protein is Cold-regulated protein BLT14 (BLT14).